Consider the following 565-residue polypeptide: NAD-dependent malic enzyme (565 aa).

The active-site Proton donor is the Y104. R157 provides a ligand contact to NAD(+). K175 functions as the Proton acceptor in the catalytic mechanism. A divalent metal cation-binding residues include E246, D247, and D270. NAD(+) contacts are provided by D270 and N418.

It belongs to the malic enzymes family. Homotetramer. Mg(2+) serves as cofactor. The cofactor is Mn(2+).

The enzyme catalyses (S)-malate + NAD(+) = pyruvate + CO2 + NADH. It catalyses the reaction oxaloacetate + H(+) = pyruvate + CO2. The protein is NAD-dependent malic enzyme of Enterobacter sp. (strain 638).